Consider the following 984-residue polypeptide: Putative formate dehydrogenase SAR2393 (984 aa).

One can recognise a 2Fe-2S ferredoxin-type domain in the interval 3–79; the sequence is EHLVVTLDGK…PMTVNTVNND (77 aa). C37, C48, C51, and C63 together coordinate [2Fe-2S] cluster. One can recognise a 4Fe-4S His(Cys)3-ligated-type domain in the interval 79–119; it reads DVKDAQKEALDRILEKHMLYCTVCDYNNGDCEIHNTMDAWG. Positions 95, 99, 102, 109, 147, 150, 153, 157, 190, 193, 196, 200, 264, 267, 271, and 299 each coordinate [4Fe-4S] cluster. 2 4Fe-4S ferredoxin-type domains span residues 138 to 165 and 181 to 211; these read PFYRYDPNQCILCGRCVEACQDIELNET and NDVPINESSCVSCGQCATVCPCNAMMEVNME. Positions 252–984 are formate dehydrogenase; that stretch reads MRKERIKKTK…YVFPGNQVDK (733 aa). The region spanning 257-313 is the 4Fe-4S Mo/W bis-MGD-type domain; that stretch reads IKKTKTVCTYCGVGCSFEVWTKDREILKVQPSHDSPANKIATCVKGKFSWGHINSDQ.

This sequence in the C-terminal section; belongs to the prokaryotic molybdopterin-containing oxidoreductase family. Requires [2Fe-2S] cluster as cofactor. The cofactor is [4Fe-4S] cluster. It depends on Mo-bis(molybdopterin guanine dinucleotide) as a cofactor.

It catalyses the reaction formate + NAD(+) = CO2 + NADH. The sequence is that of Putative formate dehydrogenase SAR2393 from Staphylococcus aureus (strain MRSA252).